Consider the following 136-residue polypeptide: MGKFMKPGKVVLVLAGRYSGRKAVIVKNIDDGTSDRPYSHALVAGIDRYPRKVTAAMGKKKIAKRSKIKSFVKVYNYNHLMPTRYSVDIPLDKTVVNKDVFRDPALKRKARREAKVKFEERYKTGKNKWFFQKLRF.

In terms of domain architecture, KOW spans 5–40; that stretch reads MKPGKVVLVLAGRYSGRKAVIVKNIDDGTSDRPYSH. Residues K27 and K93 each carry the N6-acetyllysine modification.

The protein belongs to the eukaryotic ribosomal protein eL27 family. As to quaternary structure, component of the large ribosomal subunit. Interacts with RRP1B. Component of the large ribosomal subunit. Interacts with RRP1B. Interacts with DHX33.

It localises to the cytoplasm. It is found in the cytosol. The protein resides in the rough endoplasmic reticulum. In terms of biological role, component of the large ribosomal subunit. Required for proper rRNA processing and maturation of 28S and 5.8S rRNAs. In Bos taurus (Bovine), this protein is Large ribosomal subunit protein eL27 (RPL27).